The sequence spans 271 residues: Tryptophan synthase alpha chain (271 aa).

Active-site proton acceptor residues include glutamate 49 and aspartate 60.

Belongs to the TrpA family. As to quaternary structure, tetramer of two alpha and two beta chains.

The catalysed reaction is (1S,2R)-1-C-(indol-3-yl)glycerol 3-phosphate + L-serine = D-glyceraldehyde 3-phosphate + L-tryptophan + H2O. Its pathway is amino-acid biosynthesis; L-tryptophan biosynthesis; L-tryptophan from chorismate: step 5/5. In terms of biological role, the alpha subunit is responsible for the aldol cleavage of indoleglycerol phosphate to indole and glyceraldehyde 3-phosphate. In Buchnera aphidicola subsp. Schizaphis graminum (strain Sg), this protein is Tryptophan synthase alpha chain.